We begin with the raw amino-acid sequence, 352 residues long: Chorismate synthase (352 aa).

The NADP(+) site is built by R48 and R54. FMN-binding positions include 125–127 (RAS), 238–239 (NA), A278, 293–297 (KPASS), and R319.

This sequence belongs to the chorismate synthase family. In terms of assembly, homotetramer. FMNH2 is required as a cofactor.

The catalysed reaction is 5-O-(1-carboxyvinyl)-3-phosphoshikimate = chorismate + phosphate. It participates in metabolic intermediate biosynthesis; chorismate biosynthesis; chorismate from D-erythrose 4-phosphate and phosphoenolpyruvate: step 7/7. Its function is as follows. Catalyzes the anti-1,4-elimination of the C-3 phosphate and the C-6 proR hydrogen from 5-enolpyruvylshikimate-3-phosphate (EPSP) to yield chorismate, which is the branch point compound that serves as the starting substrate for the three terminal pathways of aromatic amino acid biosynthesis. This reaction introduces a second double bond into the aromatic ring system. The sequence is that of Chorismate synthase from Coxiella burnetii (strain RSA 493 / Nine Mile phase I).